An 880-amino-acid chain; its full sequence is Alanine--tRNA ligase (880 aa).

Positions 567, 571, 669, and 673 each coordinate Zn(2+).

The protein belongs to the class-II aminoacyl-tRNA synthetase family. Zn(2+) is required as a cofactor.

The protein resides in the cytoplasm. It catalyses the reaction tRNA(Ala) + L-alanine + ATP = L-alanyl-tRNA(Ala) + AMP + diphosphate. Catalyzes the attachment of alanine to tRNA(Ala) in a two-step reaction: alanine is first activated by ATP to form Ala-AMP and then transferred to the acceptor end of tRNA(Ala). Also edits incorrectly charged Ser-tRNA(Ala) and Gly-tRNA(Ala) via its editing domain. The polypeptide is Alanine--tRNA ligase (Bacillus thuringiensis subsp. konkukian (strain 97-27)).